The following is a 412-amino-acid chain: Serine hydroxymethyltransferase (412 aa).

Residues Leu125 and 129-131 (GHL) each bind (6S)-5,6,7,8-tetrahydrofolate. The residue at position 234 (Lys234) is an N6-(pyridoxal phosphate)lysine. (6S)-5,6,7,8-tetrahydrofolate is bound at residue Glu250.

Belongs to the SHMT family. As to quaternary structure, homodimer. The cofactor is pyridoxal 5'-phosphate.

It is found in the cytoplasm. The enzyme catalyses (6R)-5,10-methylene-5,6,7,8-tetrahydrofolate + glycine + H2O = (6S)-5,6,7,8-tetrahydrofolate + L-serine. Its pathway is one-carbon metabolism; tetrahydrofolate interconversion. It functions in the pathway amino-acid biosynthesis; glycine biosynthesis; glycine from L-serine: step 1/1. Its function is as follows. Catalyzes the reversible interconversion of serine and glycine with tetrahydrofolate (THF) serving as the one-carbon carrier. This reaction serves as the major source of one-carbon groups required for the biosynthesis of purines, thymidylate, methionine, and other important biomolecules. Also exhibits THF-independent aldolase activity toward beta-hydroxyamino acids, producing glycine and aldehydes, via a retro-aldol mechanism. The protein is Serine hydroxymethyltransferase of Deinococcus geothermalis (strain DSM 11300 / CIP 105573 / AG-3a).